A 278-amino-acid chain; its full sequence is Large ribosomal subunit protein uL2 (278 aa).

2 disordered regions span residues Leu-33–Gly-53 and Leu-219–Arg-278. The segment covering Ile-269–Arg-278 has biased composition (basic residues).

It belongs to the universal ribosomal protein uL2 family. As to quaternary structure, part of the 50S ribosomal subunit. Forms a bridge to the 30S subunit in the 70S ribosome.

Functionally, one of the primary rRNA binding proteins. Required for association of the 30S and 50S subunits to form the 70S ribosome, for tRNA binding and peptide bond formation. It has been suggested to have peptidyltransferase activity; this is somewhat controversial. Makes several contacts with the 16S rRNA in the 70S ribosome. The chain is Large ribosomal subunit protein uL2 from Sphingopyxis alaskensis (strain DSM 13593 / LMG 18877 / RB2256) (Sphingomonas alaskensis).